Consider the following 652-residue polypeptide: Acetyl-coenzyme A synthetase (652 aa).

Residues 193-196 (RRGK) and threonine 312 contribute to the CoA site. ATP-binding positions include 388–390 (GEP), 412–417 (DTWWQT), aspartate 501, and arginine 516. Serine 524 is a CoA binding site. Mg(2+) is bound by residues valine 538, histidine 540, and valine 543. Lysine 611 is subject to N6-acetyllysine.

Belongs to the ATP-dependent AMP-binding enzyme family. Requires Mg(2+) as cofactor. Acetylated. Deacetylation by the SIR2-homolog deacetylase activates the enzyme.

It carries out the reaction acetate + ATP + CoA = acetyl-CoA + AMP + diphosphate. Its function is as follows. Catalyzes the conversion of acetate into acetyl-CoA (AcCoA), an essential intermediate at the junction of anabolic and catabolic pathways. AcsA undergoes a two-step reaction. In the first half reaction, AcsA combines acetate with ATP to form acetyl-adenylate (AcAMP) intermediate. In the second half reaction, it can then transfer the acetyl group from AcAMP to the sulfhydryl group of CoA, forming the product AcCoA. The chain is Acetyl-coenzyme A synthetase from Streptomyces avermitilis (strain ATCC 31267 / DSM 46492 / JCM 5070 / NBRC 14893 / NCIMB 12804 / NRRL 8165 / MA-4680).